The chain runs to 158 residues: Tryptophan-rich protein TspO (158 aa).

5 helical membrane passes run 5–25 (ILTLALCIGLCLAVGFAGSTF), 48–68 (LFPPVWTILFIMMGTALAKVL), 79–99 (VGVVLFAIQLMLNLGWSASFF), 105–125 (LAGLVDIVLLWIFIVLTMLAF), and 134–154 (LLLVPYLCWVSFASYLNFTIL).

Belongs to the TspO/BZRP family.

The protein resides in the membrane. The protein localises to the cell membrane. Its function is as follows. Binds tetrapyrroles and promotes the photooxidative degradation of protoporphyrin IX. Can bind the benzodiazepine receptor agonist PK-11195 (in vitro); this interferes with photooxidative tetrapyrrole degradation. May play a role in the transmembrane transport of tetrapyrroles and similar compounds. The protein is Tryptophan-rich protein TspO of Chlorobaculum tepidum (strain ATCC 49652 / DSM 12025 / NBRC 103806 / TLS) (Chlorobium tepidum).